We begin with the raw amino-acid sequence, 709 residues long: Polyribonucleotide nucleotidyltransferase (709 aa).

Asp487 and Asp493 together coordinate Mg(2+). A KH domain is found at 554–613 (PRIHTMKISSDKIKDVIGKGGAVIRALCEETGTTIEIEDDGTIKIAATEGAAAKEAIRRI). Residues 623-691 (GKIYTGKVMR…RQGRIRLSIK (69 aa)) enclose the S1 motif domain.

The protein belongs to the polyribonucleotide nucleotidyltransferase family. As to quaternary structure, component of the RNA degradosome, which is a multiprotein complex involved in RNA processing and mRNA degradation. Mg(2+) serves as cofactor.

The protein localises to the cytoplasm. The catalysed reaction is RNA(n+1) + phosphate = RNA(n) + a ribonucleoside 5'-diphosphate. Involved in mRNA degradation. Catalyzes the phosphorolysis of single-stranded polyribonucleotides processively in the 3'- to 5'-direction. This chain is Polyribonucleotide nucleotidyltransferase, found in Aliivibrio fischeri (strain MJ11) (Vibrio fischeri).